The chain runs to 415 residues: Plant UBX domain-containing protein 16 (415 aa).

Residues 19–69 (QLDEEIVLFRQDQLISSFLEIAVDQTAETARILLQTTDWNIDQAVNLFLTN) enclose the UBA domain. The UBX domain occupies 333-413 (DRSVVCSLCV…GLANSLISVT (81 aa)).

The polypeptide is Plant UBX domain-containing protein 16 (Arabidopsis thaliana (Mouse-ear cress)).